Here is a 245-residue protein sequence, read N- to C-terminus: Type I iodothyronine deiodinase (245 aa).

The Extracellular segment spans residues 1–9 (LSIRVLLHK). Residues 10–30 (LLILLQVTLSVVVGKTMMILF) traverse the membrane as a helical; Signal-anchor for type III membrane protein segment. Residues 31-245 (PDTTKRYILK…EIRAVLEKLK (215 aa)) are Cytoplasmic-facing. U123 is an active-site residue. A non-standard amino acid (selenocysteine) is located at residue U123.

Belongs to the iodothyronine deiodinase family. Predominantly monomer. Can form homodimers but homodimerization is not essential for enzyme activity.

The protein localises to the cell membrane. It localises to the endoplasmic reticulum membrane. The protein resides in the basolateral cell membrane. It catalyses the reaction 3,3',5-triiodo-L-thyronine + iodide + A + H(+) = L-thyroxine + AH2. It carries out the reaction 3,3',5'-triiodo-L-thyronine + iodide + A + H(+) = L-thyroxine + AH2. The catalysed reaction is 3,3'-diiodo-L-thyronine + iodide + A + H(+) = 3,3',5'-triiodo-L-thyronine + AH2. The enzyme catalyses 3,3'-diiodo-L-thyronine + iodide + A + H(+) = 3,3',5-triiodo-L-thyronine + AH2. It catalyses the reaction 3'-iodo-L-thyronine + iodide + A + H(+) = 3',5'-diiodo-L-thyronine + AH2. It carries out the reaction 3-iodo-L-thyronine + iodide + A + H(+) = 3,5-diiodo-L-thyronine + AH2. The catalysed reaction is 3-iodo-L-thyronine + iodide + A + H(+) = 3,3'-diiodo-L-thyronine + AH2. The enzyme catalyses 3,3'-diiodothyronamine + iodide + A + H(+) = 3,3',5'-triiodothyronamine + AH2. It catalyses the reaction 3'-iodothyronamine + iodide + A + H(+) = 3',5'-diiodothyronamine + AH2. It carries out the reaction 3-iodothyronamine + iodide + A + H(+) = 3,3'-diiodothyronamine + AH2. The catalysed reaction is 3,3'-diiodothyronamine + iodide + A + H(+) = 3,3',5-triiodothyronamine + AH2. The enzyme catalyses 3-iodothyronamine + iodide + A + H(+) = 3,5-diiodothyronamine + AH2. It catalyses the reaction 3,3'-diiodo-L-thyronine sulfate + iodide + A + H(+) = 3,3',5'-triiodo-L-thyronine sulfate + AH2. It carries out the reaction 3,3',5'-triiodo-L-thyronine sulfate + iodide + A + H(+) = L-thyroxine sulfate + AH2. The catalysed reaction is 3,3'-diiodo-L-thyronine sulfate + iodide + A + H(+) = 3,3',5-triiodo-L-thyronine sulfate + AH2. In terms of biological role, plays a crucial role in the metabolism of thyroid hormones (TH) and has specific roles in TH activation and inactivation by deiodination. Catalyzes the deiodiantion of L-thyroxine (T4) to 3,5,3'-triiodothyronine (T3) and 3,3',5'-triiodothyronine (rT3) to 3,3'-diiodothyronine (3,3'-T2) via outer-ring deiodination (ORD). Catalyzes the deiodiantion of T4 to rT3, T3 to 3,3'-T2, 3,5-diiodothyronine (3,5-T2) to 3-monoiodothyronine (3-T1) and 3,3'-T2 to 3-T1 via inner-ring deiodination (IRD). Catalyzes the deiodiantion of 3',5'-diiodothyronine (3',5'-T2) to 3'-monoiodothyronine (3'-T1) via ORD. Catalyzes the phenolic ring deiodinations of 3,3',5'-triiodothyronamine, 3',5'-diiodothyronamine and 3,3'-diiodothyronamine as well as tyrosyl ring deiodinations of 3,5,3'-triiodothyronamine and 3,5-diiodothyronamine. Catalyzes the deiodination of L-thyroxine sulfate and 3,3',5-triiodo-L-thyronine sulfate via IRD and of 3,3',5'-triiodo-L-thyronine sulfate via ORD. The sequence is that of Type I iodothyronine deiodinase (DIO1) from Gallus gallus (Chicken).